Reading from the N-terminus, the 442-residue chain is C4-dicarboxylate transport protein (442 aa).

The next 8 membrane-spanning stretches (helical) occupy residues glutamine 19–proline 39, leucine 55–methionine 75, alanine 90–valine 110, isoleucine 161–alanine 181, leucine 199–isoleucine 219, tryptophan 232–valine 252, isoleucine 318–glycine 338, and alanine 366–valine 386.

Belongs to the dicarboxylate/amino acid:cation symporter (DAACS) (TC 2.A.23) family.

Its subcellular location is the cell inner membrane. Functionally, responsible for the transport of dicarboxylates such as succinate, fumarate, and malate from the periplasm across the membrane. The polypeptide is C4-dicarboxylate transport protein (Delftia acidovorans (strain DSM 14801 / SPH-1)).